Here is a 590-residue protein sequence, read N- to C-terminus: MMRSHYCGGLNRENIGQEVTLSGWVHRRRDLGGLIFIDMRDREGIVQVCFDPKYQQALTRAASLRNEFCIQIKGEVIARPDNQINKNMATGEVEVLAKELSVYNAADVLPLDFNQNNTEEQRLKYRYLDLRRPEMAQRLKTRAKITSFVRRFMDDNGFLDIETPMLTKATPEGARDYLVPSRVHKGKFYALPQSPQLFKQLLMMSGFDRYYQIVKCFRDEDLRADRQPEFTQIDVETSFLTAPEVREIMEKMIHGLWLNTINVDLGKFPVMTWTEAMQRFGSDKPDLRNPLEITDVADIVKDVDFKVFSGPANDPNGRVAVIRVPNGASVTRKQIDEYTQFVGIYGAKGLAWLKVNDVNAGLEGVQSPIAKFLTEEKIKAIFDRTSAQTGDILFFGADKWQTATDALGALRLKLGRDLALTQLDQWAPLWVIDFPMFERDEEGNLAAMHHPFTSPKDFSPEQLEADPTGAVANAYDMVINGYEVGGGSVRIFDPKMQQTVFRILGIDEQQQREKFGFLLDALKFGTPPHAGLAFGLDRLTMLLTGTDNIRDVIAFPKTTAAACLMTEAPSFANPQALEELSISVVKTDKE.

E172 serves as a coordination point for L-aspartate. The segment at 196–199 is aspartate; the sequence is QLFK. R218 is a binding site for L-aspartate. ATP is bound by residues 218–220 and Q227; that span reads RDE. H449 contacts L-aspartate. E483 provides a ligand contact to ATP. Residue R490 coordinates L-aspartate. 535 to 538 is an ATP binding site; that stretch reads GLDR.

It belongs to the class-II aminoacyl-tRNA synthetase family. Type 1 subfamily. In terms of assembly, homodimer.

It is found in the cytoplasm. The enzyme catalyses tRNA(Asp) + L-aspartate + ATP = L-aspartyl-tRNA(Asp) + AMP + diphosphate. Functionally, catalyzes the attachment of L-aspartate to tRNA(Asp) in a two-step reaction: L-aspartate is first activated by ATP to form Asp-AMP and then transferred to the acceptor end of tRNA(Asp). The protein is Aspartate--tRNA ligase of Mannheimia succiniciproducens (strain KCTC 0769BP / MBEL55E).